A 78-amino-acid chain; its full sequence is uncharacterized protein (78 aa).

A helical membrane pass occupies residues 13–33; it reads STILILLMSVLILLLSIDILA.

Its subcellular location is the membrane. This is an uncharacterized protein from Methanocaldococcus jannaschii (strain ATCC 43067 / DSM 2661 / JAL-1 / JCM 10045 / NBRC 100440) (Methanococcus jannaschii).